The primary structure comprises 173 residues: Shikimate kinase 1 (173 aa).

14–19 (GAGKST) serves as a coordination point for ATP. Ser18 serves as a coordination point for Mg(2+). Asp36, Arg60, and Gly82 together coordinate substrate. Residue Arg120 participates in ATP binding. Arg140 contacts substrate. An ATP-binding site is contributed by Gln157.

Belongs to the shikimate kinase family. Monomer. Requires Mg(2+) as cofactor.

It localises to the cytoplasm. The catalysed reaction is shikimate + ATP = 3-phosphoshikimate + ADP + H(+). The protein operates within metabolic intermediate biosynthesis; chorismate biosynthesis; chorismate from D-erythrose 4-phosphate and phosphoenolpyruvate: step 5/7. Its function is as follows. Catalyzes the specific phosphorylation of the 3-hydroxyl group of shikimic acid using ATP as a cosubstrate. The polypeptide is Shikimate kinase 1 (Shigella boydii serotype 18 (strain CDC 3083-94 / BS512)).